The following is a 92-amino-acid chain: Small ribosomal subunit protein uS19 (92 aa).

Belongs to the universal ribosomal protein uS19 family.

Protein S19 forms a complex with S13 that binds strongly to the 16S ribosomal RNA. The chain is Small ribosomal subunit protein uS19 from Tolumonas auensis (strain DSM 9187 / NBRC 110442 / TA 4).